Reading from the N-terminus, the 618-residue chain is DNA mismatch repair protein MutL (618 aa).

It belongs to the DNA mismatch repair MutL/HexB family.

This protein is involved in the repair of mismatches in DNA. It is required for dam-dependent methyl-directed DNA mismatch repair. May act as a 'molecular matchmaker', a protein that promotes the formation of a stable complex between two or more DNA-binding proteins in an ATP-dependent manner without itself being part of a final effector complex. This Porphyromonas gingivalis (strain ATCC BAA-308 / W83) protein is DNA mismatch repair protein MutL.